A 335-amino-acid polypeptide reads, in one-letter code: Ketol-acid reductoisomerase (NADP(+)) (335 aa).

Positions 5 to 185 (SKIYTDNDAN…GATRAGVIPT (181 aa)) constitute a KARI N-terminal Rossmann domain. NADP(+)-binding positions include 28 to 31 (YGSQ), S56, and 86 to 89 (DMVQ). H111 is an active-site residue. G137 serves as a coordination point for NADP(+). Residues 186-331 (TFKEETETDL…NQLRDLVQKG (146 aa)) enclose the KARI C-terminal knotted domain. Mg(2+)-binding residues include D194, E198, E230, and E234. S255 is a substrate binding site.

This sequence belongs to the ketol-acid reductoisomerase family. It depends on Mg(2+) as a cofactor.

It catalyses the reaction (2R)-2,3-dihydroxy-3-methylbutanoate + NADP(+) = (2S)-2-acetolactate + NADPH + H(+). The enzyme catalyses (2R,3R)-2,3-dihydroxy-3-methylpentanoate + NADP(+) = (S)-2-ethyl-2-hydroxy-3-oxobutanoate + NADPH + H(+). It participates in amino-acid biosynthesis; L-isoleucine biosynthesis; L-isoleucine from 2-oxobutanoate: step 2/4. It functions in the pathway amino-acid biosynthesis; L-valine biosynthesis; L-valine from pyruvate: step 2/4. Functionally, involved in the biosynthesis of branched-chain amino acids (BCAA). Catalyzes an alkyl-migration followed by a ketol-acid reduction of (S)-2-acetolactate (S2AL) to yield (R)-2,3-dihydroxy-isovalerate. In the isomerase reaction, S2AL is rearranged via a Mg-dependent methyl migration to produce 3-hydroxy-3-methyl-2-ketobutyrate (HMKB). In the reductase reaction, this 2-ketoacid undergoes a metal-dependent reduction by NADPH to yield (R)-2,3-dihydroxy-isovalerate. This is Ketol-acid reductoisomerase (NADP(+)) from Saccharolobus solfataricus (strain ATCC 35092 / DSM 1617 / JCM 11322 / P2) (Sulfolobus solfataricus).